The following is a 272-amino-acid chain: Pantothenate synthetase (272 aa).

ATP is bound at residue 27–34; sequence MGALHNGH. Catalysis depends on His-34, which acts as the Proton donor. Gln-58 is a binding site for (R)-pantoate. Residue Gln-58 participates in beta-alanine binding. Residue 143-146 coordinates ATP; the sequence is GKKD. Gln-149 contributes to the (R)-pantoate binding site. ATP-binding positions include Val-172 and 180–183; that span reads LSSR.

It belongs to the pantothenate synthetase family. In terms of assembly, homodimer.

Its subcellular location is the cytoplasm. The enzyme catalyses (R)-pantoate + beta-alanine + ATP = (R)-pantothenate + AMP + diphosphate + H(+). It functions in the pathway cofactor biosynthesis; (R)-pantothenate biosynthesis; (R)-pantothenate from (R)-pantoate and beta-alanine: step 1/1. In terms of biological role, catalyzes the condensation of pantoate with beta-alanine in an ATP-dependent reaction via a pantoyl-adenylate intermediate. The sequence is that of Pantothenate synthetase from Aliarcobacter butzleri (strain RM4018) (Arcobacter butzleri).